A 287-amino-acid chain; its full sequence is MTVPTPRHGTPHGGLPGRTVLITGATSGIGRAAALAIARQGARVVLVGRDPERLRTVTNEVARTAGPAPDAFRADFAELRQVRELGERLRDRYPRIDVMAGNAGGMFWSRTTTQDGFEATLQVNHLAGFLLARLLRERLAGGRLILTSSDAYTQGRIDPDDLNGDRHRYSAGQAYGTSKQANIMTATEAARRWPDVLTVSYHPGEVRTRIGRGTVASTYFRFNPFLRSAAKGADTLVWLAAAPAEELTTGGYYSDRRLSPVSGPTADAGLAAKLWEASAAAVGDTAR.

24 to 30 (GATSGIG) provides a ligand contact to NADP(+). Ser149 lines the substrate pocket. Catalysis depends on Tyr175, which acts as the Proton acceptor.

It belongs to the short-chain dehydrogenases/reductases (SDR) family.

Functionally, could reduce the 13-carbonyl of daunorubicin to produce (13S)-13-dihydrodaunorubicin. Could also be able to reduce the 13-carbonyl of doxorubicin. The chain is Putative daunorubicin C-13 ketoreductase DnrU from Streptomyces sp. (strain C5).